The chain runs to 318 residues: NADH-ubiquinone oxidoreductase chain 1 (318 aa).

The next 8 membrane-spanning stretches (helical) occupy residues 2 to 22 (FMINILTLILPILLAVAFLTL), 70 to 90 (MFIIAPVLALALALTMWSPLP), 100 to 120 (LGVLFMLAMSSLAVYSILWSG), 136 to 156 (VAQTISYEVTLAIILLSVLLM), 172 to 192 (LWLLFPSWPLAMMWFISTLAE), 222 to 242 (LFFLAEYANIIMMNMFTAILF), 253 to 273 (ELYTTNLIIKTLLLTMSFLWI), and 294 to 314 (LPLTLALCMWHISLPIMTASI).

The protein belongs to the complex I subunit 1 family. In terms of assembly, core subunit of respiratory chain NADH dehydrogenase (Complex I) which is composed of 45 different subunits.

The protein resides in the mitochondrion inner membrane. The enzyme catalyses a ubiquinone + NADH + 5 H(+)(in) = a ubiquinol + NAD(+) + 4 H(+)(out). Core subunit of the mitochondrial membrane respiratory chain NADH dehydrogenase (Complex I) which catalyzes electron transfer from NADH through the respiratory chain, using ubiquinone as an electron acceptor. Essential for the catalytic activity and assembly of complex I. This is NADH-ubiquinone oxidoreductase chain 1 (MT-ND1) from Balaenoptera musculus (Blue whale).